Consider the following 214-residue polypeptide: Adenylate kinase (214 aa).

ATP is bound at residue 10-15 (GAGKGT). The tract at residues 30–59 (STGDMLRAAVKAGTPLGLEAKKVMDAGQLV) is NMP. AMP-binding positions include threonine 31, arginine 36, 57-59 (QLV), 85-88 (GFPR), and glutamine 92. The LID stretch occupies residues 122-159 (GRRVHPGSGRVYHIVYNPPKVEGKDDVTGEDLAIRPDD). ATP contacts are provided by residues arginine 123 and 132-133 (VY). Residues arginine 156 and arginine 167 each contribute to the AMP site. ATP is bound at residue glutamine 200.

The protein belongs to the adenylate kinase family. Monomer.

Its subcellular location is the cytoplasm. It carries out the reaction AMP + ATP = 2 ADP. It participates in purine metabolism; AMP biosynthesis via salvage pathway; AMP from ADP: step 1/1. Its function is as follows. Catalyzes the reversible transfer of the terminal phosphate group between ATP and AMP. Plays an important role in cellular energy homeostasis and in adenine nucleotide metabolism. This Shewanella loihica (strain ATCC BAA-1088 / PV-4) protein is Adenylate kinase.